The chain runs to 364 residues: tRNA (adenine(58)-N(1))-methyltransferase catalytic subunit trm61 (364 aa).

Residues 114–116 (SAS), E135, R140, 167–168 (DV), and D186 contribute to the S-adenosyl-L-methionine site. The disordered stretch occupies residues 280-309 (EQNLSSDAKVEDQDNDSMLGENKSSVSTET).

The protein belongs to the class I-like SAM-binding methyltransferase superfamily. TRM61 family. In terms of assembly, heterotetramer; composed of two copies of TRM6 and two copies of TRM61.

The protein localises to the nucleus. It catalyses the reaction adenosine(58) in tRNA + S-adenosyl-L-methionine = N(1)-methyladenosine(58) in tRNA + S-adenosyl-L-homocysteine + H(+). Its function is as follows. Catalytic subunit of tRNA (adenine-N(1)-)-methyltransferase, which catalyzes the formation of N(1)-methyladenine at position 58 (m1A58) in initiator methionyl-tRNA. The protein is tRNA (adenine(58)-N(1))-methyltransferase catalytic subunit trm61 (cpd1) of Schizosaccharomyces pombe (strain 972 / ATCC 24843) (Fission yeast).